The sequence spans 238 residues: Ribonuclease HII (238 aa).

One can recognise an RNase H type-2 domain in the interval 12 to 197; that stretch reads GIVAGVDEAG…VLELLTDDLL (186 aa). Residues Asp18, Glu19, and Asp107 each contribute to the a divalent metal cation site.

The protein belongs to the RNase HII family. It depends on Mn(2+) as a cofactor. Mg(2+) is required as a cofactor.

The protein localises to the cytoplasm. It catalyses the reaction Endonucleolytic cleavage to 5'-phosphomonoester.. Functionally, endonuclease that specifically degrades the RNA of RNA-DNA hybrids. This chain is Ribonuclease HII, found in Thermotoga petrophila (strain ATCC BAA-488 / DSM 13995 / JCM 10881 / RKU-1).